We begin with the raw amino-acid sequence, 887 residues long: Putative RNA-binding protein 15B (887 aa).

The interval 1 to 132 (MKRQSERDSS…EPAGPGSTAA (132 aa)) is disordered. Positions 10 to 20 (SPSGRGSSSSA) are enriched in low complexity. Composition is skewed to basic and acidic residues over residues 22-34 (RPRE…EAGG) and 65-77 (GHRD…DANH). The segment covering 83-94 (RSSGAPGGGGRT) has biased composition (gly residues). Residues 95-110 (GKASGDPGAGGASPRA) are compositionally biased toward low complexity. Phosphoserine occurs at positions 107 and 111. Residues 111 to 122 (SPLPPPPPPPGA) show a composition bias toward pro residues. Over residues 123–132 (EPAGPGSTAA) the composition is skewed to low complexity. The RRM 1 domain maps to 136-216 (KTLLISSLSP…RPLKVEPVYL (81 aa)). A Glycyl lysine isopeptide (Lys-Gly) (interchain with G-Cter in SUMO2) cross-link involves residue K210. The interval 215–249 (YLRGGGSSRRSSSSSAAASTPPPGPPAPADPLGYL) is disordered. A compositionally biased stretch (low complexity) spans 222-233 (SRRSSSSSAAAS). A compositionally biased stretch (pro residues) spans 234 to 243 (TPPPGPPAPA). Residues S261 and S263 each carry the phosphoserine modification. RRM domains lie at 333 to 410 (RNLF…YGKA) and 414 to 488 (TRLW…FAKA). A Phosphothreonine modification is found at T529. A phosphoserine mark is found at S549, S553, and S559. The tract at residues 549-703 (SLSKSSDRRN…TLEEPKHETK (155 aa)) is disordered. Composition is skewed to basic and acidic residues over residues 570 to 613 (RSGE…ERSR), 623 to 643 (RGSD…EGTK), and 668 to 700 (EAPD…EPKH). The Nuclear localization signal motif lies at 590–594 (RRKRR). K699 participates in a covalent cross-link: Glycyl lysine isopeptide (Lys-Gly) (interchain with G-Cter in SUMO2). The SPOC domain occupies 708 to 886 (LSEYAQTLQL…HMVIVIVRDT (179 aa)). Residues 719–887 (WNGLLVLKNS…MVIVIVRDTA (169 aa)) are interaction with Epstein-Barr virus BMLF1.

This sequence belongs to the RRM Spen family. In terms of assembly, component of the WMM complex, a N6-methyltransferase complex composed of a catalytic subcomplex, named MAC, and of an associated subcomplex, named MACOM. The MAC subcomplex is composed of METTL3 and METTL14. The MACOM subcomplex is composed of WTAP, ZC3H13, CBLL1/HAKAI, VIRMA, and, in some cases of RBM15 (RBM15 or RBM15B). May interact with NCOR2. Interacts with NXF1, the interaction is required to promote mRNA export.

It is found in the nucleus. The protein localises to the nucleoplasm. It localises to the nucleus speckle. Its subcellular location is the nucleus envelope. RNA-binding protein that acts as a key regulator of N6-methyladenosine (m6A) methylation of RNAs, thereby regulating different processes, such as alternative splicing of mRNAs and X chromosome inactivation mediated by Xist RNA. Associated component of the WMM complex, a complex that mediates N6-methyladenosine (m6A) methylation of RNAs, a modification that plays a role in the efficiency of mRNA splicing and RNA processing. Plays a key role in m6A methylation, possibly by binding target RNAs and recruiting the WMM complex. Involved in random X inactivation mediated by Xist RNA: acts by binding Xist RNA and recruiting the WMM complex, which mediates m6A methylation, leading to target YTHDC1 reader on Xist RNA and promoting transcription repression activity of Xist. Functions in the regulation of alternative or illicit splicing, possibly by regulating m6A methylation. Inhibits pre-mRNA splicing. Also functions as a mRNA export factor by acting as a cofactor for the nuclear export receptor NXF1. This is Putative RNA-binding protein 15B (Rbm15b) from Mus musculus (Mouse).